We begin with the raw amino-acid sequence, 723 residues long: MSESSASALQLGRPSRQPAVHPENLSLDASCFSSPPVNFLQELPSYRSIARRRTTVHSRDKQSGTLLKSTDSYSSQLEDRIAENLSSQSLRNYALNISEKRRLRDIQETQMKYLSEWDQWKRYSSKSWKRFLEKAREMTTHLELWREDIRSIEGKFGTGIQSYFSFLRFLVLLNLVIFLIIFMLVLLPILLTKYKITNSSFVLIPFKDTDIQCTVYPVSSSGLIYFYSYIIDLLSGTGFLEETSLFYGHYTIDGVKFQNFTYDLPLAYLISTIAYLALSLLWIVKRSVEGFKINLIRSEEHFQSYCNKIFAGWDFCITNRSMADLKHSSLRYELRADLEEERIRQKIAERTSEETIRIYSLRLFLNCIVLAVLGACFYAIYVATVFSQEHMKKEIDKMVFGENLLILYLPSIVITLANFITPMIFAKIIRYEDYSPGFEIRLTILRCVFMRLATICVLVFTLGSKITSCDDDTCDLCGYNQKLYPCWETQVGQEMYKLMIFDFIIILAVTLFVDFPRKLLVTYCSSWKLIQCWGQQEFAIPDNVLGIVYGQTICWIGAFFSPLLPAIATLKFIIIFYVKEWSLLYTCRPSPRPFRASNSNFFFLLVLLIGLCLAIIPLTISISRIPSSKACGPFTNFNTTWEVIPKTVSTFPSSLQSFIHGVTSEAFAVPFFMIICLIMFYFIALAGAHKRVVIQLREQLSLESRDKRYLIQKLTEAQRDTRN.

The interval 1-21 is disordered; that stretch reads MSESSASALQLGRPSRQPAVH. Over 1–168 the chain is Extracellular; the sequence is MSESSASALQ…GIQSYFSFLR (168 aa). N24 carries an N-linked (GlcNAc...) asparagine glycan. Residues 51–70 form a disordered region; sequence RRRTTVHSRDKQSGTLLKST. N-linked (GlcNAc...) asparagine glycosylation occurs at N84. The residue at position 89 (S89) is a Phosphoserine. N96 is a glycosylation site (N-linked (GlcNAc...) asparagine). Residues 169-189 traverse the membrane as a helical segment; that stretch reads FLVLLNLVIFLIIFMLVLLPI. At 190–219 the chain is on the cytoplasmic side; that stretch reads LLTKYKITNSSFVLIPFKDTDIQCTVYPVS. The chain crosses the membrane as a helical span at residues 220–240; it reads SSGLIYFYSYIIDLLSGTGFL. The Extracellular segment spans residues 241–263; sequence EETSLFYGHYTIDGVKFQNFTYD. The N-linked (GlcNAc...) asparagine glycan is linked to N259. Residues 264-284 form a helical membrane-spanning segment; the sequence is LPLAYLISTIAYLALSLLWIV. At 285 to 362 the chain is on the cytoplasmic side; that stretch reads KRSVEGFKIN…EETIRIYSLR (78 aa). Residues 363–383 traverse the membrane as a helical segment; sequence LFLNCIVLAVLGACFYAIYVA. Residues 384–404 are Extracellular-facing; sequence TVFSQEHMKKEIDKMVFGENL. A helical membrane pass occupies residues 405 to 425; that stretch reads LILYLPSIVITLANFITPMIF. The Cytoplasmic portion of the chain corresponds to 426–494; the sequence is AKIIRYEDYS…PCWETQVGQE (69 aa). A helical membrane pass occupies residues 495 to 515; sequence MYKLMIFDFIIILAVTLFVDF. Over 516–555 the chain is Extracellular; it reads PRKLLVTYCSSWKLIQCWGQQEFAIPDNVLGIVYGQTICW. The helical transmembrane segment at 556-576 threads the bilayer; it reads IGAFFSPLLPAIATLKFIIIF. Over 577 to 601 the chain is Cytoplasmic; it reads YVKEWSLLYTCRPSPRPFRASNSNF. A helical transmembrane segment spans residues 602 to 622; sequence FFLLVLLIGLCLAIIPLTISI. The Extracellular portion of the chain corresponds to 623-665; the sequence is SRIPSSKACGPFTNFNTTWEVIPKTVSTFPSSLQSFIHGVTSE. An N-linked (GlcNAc...) asparagine glycan is attached at N638. Residues 666–686 form a helical membrane-spanning segment; that stretch reads AFAVPFFMIICLIMFYFIALA. Residues 687–723 lie on the Cytoplasmic side of the membrane; that stretch reads GAHKRVVIQLREQLSLESRDKRYLIQKLTEAQRDTRN.

It belongs to the TMC family. Interacts with PIEZO2; the interaction inhibits PIEZO2-conducted mechanically activated currents.

The protein resides in the membrane. In terms of biological role, acts as an inhibitory modulator of PIEZO2 mechanosensitive channel in dorsal root ganglion (DRG) neurons through physical interactions or interference with the interaction between Piezo2 and the cytoskeleton. This chain is Transmembrane channel-like protein 7 (TMC7), found in Macaca fascicularis (Crab-eating macaque).